The sequence spans 583 residues: Sensor protein SrrB (583 aa).

Residues 1-11 (MMSRLNSVVIK) lie on the Cytoplasmic side of the membrane. A helical membrane pass occupies residues 12–32 (LWLTIILIVTTVLILLSIALI). Topologically, residues 33 to 174 (TFMQYYFTQE…SIEDTNNAIT (142 aa)) are extracellular. Residues 175-195 (IITIITAVIFLTITTVFAFFL) form a helical membrane-spanning segment. The Cytoplasmic segment spans residues 196–583 (SSRITKPLRR…TFIIKLPKPE (388 aa)). In terms of domain architecture, HAMP spans 197-249 (SRITKPLRRLRDQATRVSEGDYSYKPSVTTKDEIGQLSQAFNQMSTEIEEHVD). A Histidine kinase domain is found at 366–583 (NVSHELRTPI…TFIIKLPKPE (218 aa)). His369 is modified (phosphohistidine; by autocatalysis).

It is found in the cell membrane. The enzyme catalyses ATP + protein L-histidine = ADP + protein N-phospho-L-histidine.. In terms of biological role, member of the two-component regulatory system SrrA/SrrB, which is involved in the global regulation of staphylococcal virulence factors in response to environmental oxygen levels as well as biofilm formation. Also plays an essential role in host-derived nitric oxide resistance by regulating hmp/flavohemoglobin, an enzyme that detoxifies nitric oxide by converting it to nitrate. Functions as a sensor protein kinase which is autophosphorylated at a histidine residue and transfers its phosphate group to SrrA. In turn, SrrA binds to the upstream promoter regions of the target genes to positively and negatively regulate their expression. This chain is Sensor protein SrrB (srrB), found in Staphylococcus aureus.